The following is a 345-amino-acid chain: uncharacterized protein (345 aa).

It belongs to the Gfo/Idh/MocA family. Biliverdin reductase subfamily.

This is an uncharacterized protein from Escherichia coli (strain K12).